Consider the following 174-residue polypeptide: Shikimate kinase 2 (174 aa).

Residue 12-17 (GAGKTT) coordinates ATP. Positions 16 and 32 each coordinate Mg(2+). Substrate-binding residues include Asp34, Arg58, and Gly79. Residues 112 to 126 (AEDPEDAQRPSLTGK) are LID domain. Position 120 (Arg120) interacts with ATP. Residue Arg139 participates in substrate binding. Gln155 is a binding site for ATP.

It belongs to the shikimate kinase family. AroL subfamily. Monomer. The cofactor is Mg(2+).

It localises to the cytoplasm. It catalyses the reaction shikimate + ATP = 3-phosphoshikimate + ADP + H(+). It functions in the pathway metabolic intermediate biosynthesis; chorismate biosynthesis; chorismate from D-erythrose 4-phosphate and phosphoenolpyruvate: step 5/7. In terms of biological role, catalyzes the specific phosphorylation of the 3-hydroxyl group of shikimic acid using ATP as a cosubstrate. This is Shikimate kinase 2 from Yersinia enterocolitica serotype O:8 / biotype 1B (strain NCTC 13174 / 8081).